The primary structure comprises 2103 residues: Zinc finger SWIM domain-containing protein 8 homolog (2103 aa).

Residues 191-227 (FNVAVTFDRRRISSCNCTCTSSAYWCSHVVAVCLHRI) form an SWIM-type zinc finger. 6 disordered regions span residues 684 to 860 (DGNR…GSTA), 1237 to 1262 (SSNP…GGSG), 1310 to 1399 (SSGS…IPNQ), 1735 to 1772 (MQMF…QVVQ), 1786 to 1864 (QQVQ…GVGV), and 1888 to 1916 (PFMQ…RQPH). Residues 724–740 (SALTESDSQSSFDAVSH) are compositionally biased toward polar residues. Composition is skewed to low complexity over residues 754–789 (AVGV…STSS) and 835–857 (GRVA…VGSG). Over residues 1237-1249 (SSNPPVRTRSNQP) the composition is skewed to polar residues. Positions 1320–1351 (GMVPTTNAAGTTGTPSSSSTTVSGSQNPNGNP) are enriched in low complexity. Residues 1352-1377 (SGSGGGGNGGGGNGGGGGGGGGGGGS) show a composition bias toward gly residues. Positions 1755 to 1764 (QPPPQQPPNP) are enriched in pro residues. Composition is skewed to low complexity over residues 1786–1813 (QQVQ…SGFQ) and 1820–1835 (AFQA…MQAG). Pro residues-rich tracts occupy residues 1836 to 1859 (PPGP…PNGP) and 1894 to 1908 (PPQP…PSQP).

The protein belongs to the ZSWIM8 family. In terms of assembly, component of the SCF-like E3 ubiquitin-protein ligase complex.

Its pathway is protein modification; protein ubiquitination. In terms of biological role, substrate recognition component of a SCF-like E3 ubiquitin-protein ligase complex that promotes target-directed microRNA degradation (TDMD), a process that mediates degradation of microRNAs (miRNAs). The SCF-like E3 ubiquitin-protein ligase complex acts by catalyzing ubiquitination and subsequent degradation of AGO1, thereby exposing miRNAs for degradation. The chain is Zinc finger SWIM domain-containing protein 8 homolog from Drosophila melanogaster (Fruit fly).